Here is a 299-residue protein sequence, read N- to C-terminus: Pectin lyase (299 aa).

The signal sequence occupies residues 1-18 (MKFSTFVSLGLTAITALA). Low complexity-rich tracts occupy residues 82 to 91 (RSAATSPSSD) and 232 to 246 (SASAQATSTTTTTRT). Disordered regions lie at residues 82-105 (RSAATSPSSDRTARSCLRTSPSPS) and 227-246 (SRGRPSASAQATSTTTTTRT).

The protein belongs to the polysaccharide lyase 1 family.

Its subcellular location is the secreted. The catalysed reaction is Eliminative cleavage of (1-&gt;4)-alpha-D-galacturonan methyl ester to give oligosaccharides with 4-deoxy-6-O-methyl-alpha-D-galact-4-enuronosyl groups at their non-reducing ends.. This chain is Pectin lyase (PELA), found in Peyronellaea pinodes (Pea foot rot fungus).